The following is a 649-amino-acid chain: 1-deoxy-D-xylulose-5-phosphate synthase 1 (649 aa).

Residues H79 and 120–122 contribute to the thiamine diphosphate site; that span reads AHS. A Mg(2+)-binding site is contributed by D151. Thiamine diphosphate contacts are provided by residues 152-153, N180, Y289, and E371; that span reads GS. Residue N180 participates in Mg(2+) binding.

The protein belongs to the transketolase family. DXPS subfamily. In terms of assembly, homodimer. Requires Mg(2+) as cofactor. Thiamine diphosphate is required as a cofactor.

The catalysed reaction is D-glyceraldehyde 3-phosphate + pyruvate + H(+) = 1-deoxy-D-xylulose 5-phosphate + CO2. It functions in the pathway metabolic intermediate biosynthesis; 1-deoxy-D-xylulose 5-phosphate biosynthesis; 1-deoxy-D-xylulose 5-phosphate from D-glyceraldehyde 3-phosphate and pyruvate: step 1/1. In terms of biological role, catalyzes the acyloin condensation reaction between C atoms 2 and 3 of pyruvate and glyceraldehyde 3-phosphate to yield 1-deoxy-D-xylulose-5-phosphate (DXP). The sequence is that of 1-deoxy-D-xylulose-5-phosphate synthase 1 from Zymomonas mobilis subsp. mobilis (strain ATCC 31821 / ZM4 / CP4).